Reading from the N-terminus, the 129-residue chain is Small ribosomal subunit protein uS8c (129 aa).

It belongs to the universal ribosomal protein uS8 family. As to quaternary structure, part of the 30S ribosomal subunit.

The protein localises to the plastid. It localises to the chloroplast. In terms of biological role, one of the primary rRNA binding proteins, it binds directly to 16S rRNA central domain where it helps coordinate assembly of the platform of the 30S subunit. The sequence is that of Small ribosomal subunit protein uS8c (rps8) from Nephroselmis olivacea (Green alga).